The following is a 542-amino-acid chain: Cryptochrome-1 (542 aa).

One can recognise a Photolyase/cryptochrome alpha/beta domain in the interval 5-140 (GANVIWFRHG…DFVEKVSHTL (136 aa)). FAD-binding positions include Arg-237, Ser-265, Ser-267, Gln-311, His-378, 410–412 (DAD), Cys-416, and Asn-419.

This sequence belongs to the DNA photolyase class-1 family. As to quaternary structure, interacts with tim and per; promoted by light conditions. Interaction with tim irreversibly commits tim to proteasomal degradation. Interacts with l(1)G0136/CG8198. The cofactor is FAD. As to expression, expressed at higher levels in the head than in body and it is more expressed in antennae than in legs, wings and mouth appendages. Prominent expression is seen in cells of the lateral brain, which are close to or coincident with the clock neurons. Abundance oscillates in a circadian manner.

It is found in the cytoplasm. The protein localises to the perinuclear region. It localises to the nucleus. Blue light-dependent regulator that is the input of the circadian feedback loop. Has no photolyase activity for cyclobutane pyrimidine dimers or 6-4 photoproducts. Regulation of expression by light suggests a role in photoreception for locomotor activity rhythms. Functions, together with per, as a transcriptional repressor required for the oscillation of peripheral circadian clocks and for the correct specification of clock cells. Genes directly activated by the transcription factors Clock (Clk) and cycle (cyc) are repressed by cry. Necessary for light-dependent magnetosensitivity, an intact circadian system is not required for the magnetoreception mechanism to operate. Required for both the naive and trained responses to magnetic field, consistent with the notion that cry is in the input pathway of magnetic sensing. The chain is Cryptochrome-1 from Drosophila melanogaster (Fruit fly).